The primary structure comprises 65 residues: Large ribosomal subunit protein bL35 (65 aa).

The protein belongs to the bacterial ribosomal protein bL35 family.

The polypeptide is Large ribosomal subunit protein bL35 (Borrelia turicatae (strain 91E135)).